The following is a 334-amino-acid chain: Thiamine thiazole synthase (334 aa).

Substrate is bound by residues Cys-86, 107–108 (EA), Gly-115, and Val-183. A 2,3-didehydroalanine (Cys) modification is found at Cys-221. Residues Asp-223, His-238, Met-290, and 300 to 302 (RMG) each bind substrate.

It belongs to the THI4 family. In terms of assembly, homooctamer. Fe cation is required as a cofactor. In terms of processing, during the catalytic reaction, a sulfide is transferred from Cys-221 to a reaction intermediate, generating a dehydroalanine residue.

Its subcellular location is the cytoplasm. The protein localises to the nucleus. It catalyses the reaction [ADP-thiazole synthase]-L-cysteine + glycine + NAD(+) = [ADP-thiazole synthase]-dehydroalanine + ADP-5-ethyl-4-methylthiazole-2-carboxylate + nicotinamide + 3 H2O + 2 H(+). In terms of biological role, involved in biosynthesis of the thiamine precursor thiazole. Catalyzes the conversion of NAD and glycine to adenosine diphosphate 5-(2-hydroxyethyl)-4-methylthiazole-2-carboxylic acid (ADT), an adenylated thiazole intermediate. The reaction includes an iron-dependent sulfide transfer from a conserved cysteine residue of the protein to a thiazole intermediate. The enzyme can only undergo a single turnover, which suggests it is a suicide enzyme. May have additional roles in adaptation to various stress conditions and in DNA damage tolerance. In Ajellomyces capsulatus (strain G186AR / H82 / ATCC MYA-2454 / RMSCC 2432) (Darling's disease fungus), this protein is Thiamine thiazole synthase.